The primary structure comprises 302 residues: Cobalt-precorrin-6A reductase (302 aa).

Residues methionine 1–threonine 10 show a composition bias toward basic and acidic residues. The interval methionine 1–glutamate 37 is disordered.

It belongs to the precorrin-6x reductase family.

It carries out the reaction Co-precorrin-6B + NAD(+) = Co-precorrin-6A + NADH + H(+). It participates in cofactor biosynthesis; adenosylcobalamin biosynthesis; cob(II)yrinate a,c-diamide from sirohydrochlorin (anaerobic route): step 7/10. Its function is as follows. Catalyzes the reduction of the macrocycle of cobalt-precorrin-6A to cobalt-precorrin-6B. The sequence is that of Cobalt-precorrin-6A reductase (cbiJ) from Methanothermobacter thermautotrophicus (strain ATCC 29096 / DSM 1053 / JCM 10044 / NBRC 100330 / Delta H) (Methanobacterium thermoautotrophicum).